Consider the following 494-residue polypeptide: Acetyl-coenzyme A carboxylase carboxyl transferase subunit beta, chloroplastic (494 aa).

The CoA carboxyltransferase N-terminal domain occupies 230–494 (LWVQCENCYG…LHGFFPLNQN (265 aa)). Residues Cys-234, Cys-237, Cys-253, and Cys-256 each contribute to the Zn(2+) site. Residues 234-256 (CENCYGLNYKKFFRSKMNICEQC) form a C4-type zinc finger.

Belongs to the AccD/PCCB family. In terms of assembly, acetyl-CoA carboxylase is a heterohexamer composed of biotin carboxyl carrier protein, biotin carboxylase and 2 subunits each of ACCase subunit alpha and ACCase plastid-coded subunit beta (accD). Zn(2+) is required as a cofactor.

It localises to the plastid. It is found in the chloroplast stroma. It carries out the reaction N(6)-carboxybiotinyl-L-lysyl-[protein] + acetyl-CoA = N(6)-biotinyl-L-lysyl-[protein] + malonyl-CoA. It functions in the pathway lipid metabolism; malonyl-CoA biosynthesis; malonyl-CoA from acetyl-CoA: step 1/1. Its function is as follows. Component of the acetyl coenzyme A carboxylase (ACC) complex. Biotin carboxylase (BC) catalyzes the carboxylation of biotin on its carrier protein (BCCP) and then the CO(2) group is transferred by the transcarboxylase to acetyl-CoA to form malonyl-CoA. The chain is Acetyl-coenzyme A carboxylase carboxyl transferase subunit beta, chloroplastic from Drimys granadensis.